A 280-amino-acid polypeptide reads, in one-letter code: Meiotic spindle formation protein 2 (280 aa).

The disordered stretch occupies residues methionine 1 to valine 104. The span at leucine 72–serine 92 shows a compositional bias: basic and acidic residues. A compositionally biased stretch (low complexity) spans serine 93–valine 104.

In terms of assembly, interacts with mei-1.

It is found in the cytoplasm. The protein resides in the cytoskeleton. The protein localises to the spindle pole. Forms a heterodimeric complex in conjunction with mei-1 which severs microtubules in vitro in an ATP-dependent manner. This activity may promote rapid reorganization of cellular microtubule arrays. May act to target mei-1 within the cell. Required specifically for meiotic spindle formation in the female germline. The protein is Meiotic spindle formation protein 2 (mei-2) of Caenorhabditis elegans.